Here is a 373-residue protein sequence, read N- to C-terminus: 4-hydroxy-3-methylbut-2-en-1-yl diphosphate synthase (flavodoxin) (373 aa).

Cys270, Cys273, Cys305, and Glu312 together coordinate [4Fe-4S] cluster.

It belongs to the IspG family. [4Fe-4S] cluster is required as a cofactor.

It catalyses the reaction (2E)-4-hydroxy-3-methylbut-2-enyl diphosphate + oxidized [flavodoxin] + H2O + 2 H(+) = 2-C-methyl-D-erythritol 2,4-cyclic diphosphate + reduced [flavodoxin]. Its pathway is isoprenoid biosynthesis; isopentenyl diphosphate biosynthesis via DXP pathway; isopentenyl diphosphate from 1-deoxy-D-xylulose 5-phosphate: step 5/6. Its function is as follows. Converts 2C-methyl-D-erythritol 2,4-cyclodiphosphate (ME-2,4cPP) into 1-hydroxy-2-methyl-2-(E)-butenyl 4-diphosphate. The polypeptide is 4-hydroxy-3-methylbut-2-en-1-yl diphosphate synthase (flavodoxin) (Erwinia tasmaniensis (strain DSM 17950 / CFBP 7177 / CIP 109463 / NCPPB 4357 / Et1/99)).